Here is a 410-residue protein sequence, read N- to C-terminus: Mating-type locus allele B1 protein (410 aa).

The tract at residues 1-110 is variable domain between B alleles; sequence MSSDPNFSLI…FNVVSPDVGC (110 aa). Positions 107–184 form a DNA-binding region, homeobox; TALE-type; it reads DVGCRNLSED…NARRRSGWSH (78 aa). Residues 111–410 form a highly conserved between B alleles region; that stretch reads RNLSEDLPAY…PFLCLSVAFV (300 aa). Disordered regions lie at residues 202–239, 278–335, and 374–395; these read RAKL…PLTP, TPKP…TPEL, and ARGN…PDEV. A compositionally biased stretch (low complexity) spans 205–233; sequence LSSSNQSTPPSSTSDSLSNNLDDVLSDNL. The short motif at 276–308 is the Nuclear localization signal element; the sequence is KKTPKPGMPRPVTTVAKRHPARKTKPAAKPKSR. The span at 291 to 307 shows a compositional bias: basic residues; that stretch reads AKRHPARKTKPAAKPKS. Polar residues predominate over residues 312–335; sequence PRASTTPSIDSTLDSSKLESTPEL. Positions 333-410 are not essential for B1 function; sequence PELSMCSTAD…PFLCLSVAFV (78 aa). The segment covering 375–388 has biased composition (basic residues); the sequence is RGNRKVKALPKRAG.

This sequence belongs to the TALE/M-ATYP homeobox family.

It localises to the nucleus. The B locus has at least 25 alleles, and any combination of two different B alleles yields a multimeric regulatory protein, that activates genes responsible for the pathogenicity and for the sexual development of the fungus within the corn plant. The sequence is that of Mating-type locus allele B1 protein from Mycosarcoma maydis (Corn smut fungus).